Consider the following 450-residue polypeptide: MSLYAPIAAIATAPGRGGIGVVRISGPDLAELAQRLFGRPLTPRHAHYLPFRAADGEVIDEGLAIYFRAPHSYTGEDVLELQGHGGPAVLRRILARCLQAGHDLGLRPAEPGEFTRRAFLNERLDLAQAEAVADLIDASSEAAARGAMTSLSGEFSQRVNDLSDRIIHLRMLVEATLDFPEEEIDFLEKYQARPTLQALTHDLDTLIAQARQGVILREGLHVVLAGKPNVGKSSLLNALAGDDIAIVTPIAGTTRDKVVQEIHIDGVPLHIVDTAGLRDTDDAVESIGIERTWKEIERADLILHLQDVTQPPDHLDAQIVRRLPARTPVLNVFNKVDLLDAAFQGQPDSLAISARGGIGLDALRQRLLQLAGWNPGAESPWLARERHLHALQQAAQHLEIATEHAREDDRVLDLFAEELRLAHEALTGITGKFTSDDLLGEIFSSFCIGK.

Residues arginine 23, glutamate 80, and arginine 123 each coordinate (6S)-5-formyl-5,6,7,8-tetrahydrofolate. Residues 219 to 372 enclose the TrmE-type G domain; sequence GLHVVLAGKP…LRQRLLQLAG (154 aa). Position 229 (asparagine 229) interacts with K(+). GTP contacts are provided by residues 229 to 234, 248 to 254, 273 to 276, and 353 to 355; these read NVGKSS, TPIAGTT, DTAG, and SAR. Residue serine 233 participates in Mg(2+) binding. K(+) is bound by residues threonine 248, isoleucine 250, and threonine 253. Threonine 254 contacts Mg(2+). Lysine 450 provides a ligand contact to (6S)-5-formyl-5,6,7,8-tetrahydrofolate.

Belongs to the TRAFAC class TrmE-Era-EngA-EngB-Septin-like GTPase superfamily. TrmE GTPase family. In terms of assembly, homodimer. Heterotetramer of two MnmE and two MnmG subunits. K(+) serves as cofactor.

Its subcellular location is the cytoplasm. Its function is as follows. Exhibits a very high intrinsic GTPase hydrolysis rate. Involved in the addition of a carboxymethylaminomethyl (cmnm) group at the wobble position (U34) of certain tRNAs, forming tRNA-cmnm(5)s(2)U34. The polypeptide is tRNA modification GTPase MnmE (Bordetella bronchiseptica (strain ATCC BAA-588 / NCTC 13252 / RB50) (Alcaligenes bronchisepticus)).